Consider the following 501-residue polypeptide: Melianol synthase CYP71BQ5 (501 aa).

Residues 1 to 21 (MEFRLPVLLSFLLFFLMLVRH) form a helical membrane-spanning segment. Cysteine 439 is a binding site for heme.

Belongs to the cytochrome P450 family. It depends on heme as a cofactor. In terms of tissue distribution, mainly expressed in petioles and roots, and, to a lower extent, in leaves.

It is found in the membrane. It carries out the reaction dihydroniloticin + 2 reduced [NADPH--hemoprotein reductase] + 2 O2 = melianol + 2 oxidized [NADPH--hemoprotein reductase] + 3 H2O + 2 H(+). It participates in secondary metabolite biosynthesis; terpenoid biosynthesis. Monooxygenase involved in the biosynthesis of limonoids triterpene natural products such as azadirachtin, an antifeedant widely used as bioinsecticide, and possessing many medicinal applications including anti-tumoral, anti-malarial, anti-rheumatic, antibacterial, anti-inflammatory, anti-pyretic and diuretic effects. Catalyzes the conversion of dihydroniloticin to the protolimonoid melianol. The polypeptide is Melianol synthase CYP71BQ5 (Melia azedarach (Chinaberry tree)).